The following is a 583-amino-acid chain: Sensor protein SrrB (583 aa).

The Cytoplasmic segment spans residues 1 to 11; the sequence is MMSRLNSVVIK. The helical transmembrane segment at 12–32 threads the bilayer; it reads LWLTIILIVTTVLILLSIALI. Topologically, residues 33–174 are extracellular; it reads TFMQYYFTQE…SIEDTNNAIT (142 aa). The helical transmembrane segment at 175–195 threads the bilayer; sequence IITIITAVIFLTITTVFAFFL. Topologically, residues 196–583 are cytoplasmic; the sequence is SSRITKPLRR…TFIIKLPKPE (388 aa). The HAMP domain maps to 197 to 249; the sequence is SRITKPLRRLRDQATRVSEGDYSYKPSVTTKDEIGQLSQAFNQMSTEIEEHVD. One can recognise a Histidine kinase domain in the interval 366–583; sequence NVSHELRTPI…TFIIKLPKPE (218 aa). Residue histidine 369 is modified to Phosphohistidine; by autocatalysis.

It localises to the cell membrane. It catalyses the reaction ATP + protein L-histidine = ADP + protein N-phospho-L-histidine.. Member of the two-component regulatory system SrrA/SrrB, which is involved in the global regulation of staphylococcal virulence factors in response to environmental oxygen levels as well as biofilm formation. Also plays an essential role in host-derived nitric oxide resistance by regulating hmp/flavohemoglobin, an enzyme that detoxifies nitric oxide by converting it to nitrate. Functions as a sensor protein kinase which is autophosphorylated at a histidine residue and transfers its phosphate group to SrrA. In turn, SrrA binds to the upstream promoter regions of the target genes to positively and negatively regulate their expression. The polypeptide is Sensor protein SrrB (srrB) (Staphylococcus aureus (strain Mu50 / ATCC 700699)).